A 660-amino-acid chain; its full sequence is UvrABC system protein B (660 aa).

Positions 26–414 constitute a Helicase ATP-binding domain; sequence KKVLAGQRHQ…PEMTEQIIRP (389 aa). ATP is bound at residue 39-46; sequence GATGTGKT. A Beta-hairpin motif is present at residues 92–115; sequence YYDYYQPEAYVPSTDTFIEKDASI. In terms of domain architecture, Helicase C-terminal spans 430-596; it reads QIDNLIEEIR…TIRKEVRDVI (167 aa). Residues 624–659 form the UVR domain; the sequence is EKVIEQMENEMKQAAKDLDFEKAAELRDVILELKAE.

This sequence belongs to the UvrB family. Forms a heterotetramer with UvrA during the search for lesions. Interacts with UvrC in an incision complex.

It localises to the cytoplasm. The UvrABC repair system catalyzes the recognition and processing of DNA lesions. A damage recognition complex composed of 2 UvrA and 2 UvrB subunits scans DNA for abnormalities. Upon binding of the UvrA(2)B(2) complex to a putative damaged site, the DNA wraps around one UvrB monomer. DNA wrap is dependent on ATP binding by UvrB and probably causes local melting of the DNA helix, facilitating insertion of UvrB beta-hairpin between the DNA strands. Then UvrB probes one DNA strand for the presence of a lesion. If a lesion is found the UvrA subunits dissociate and the UvrB-DNA preincision complex is formed. This complex is subsequently bound by UvrC and the second UvrB is released. If no lesion is found, the DNA wraps around the other UvrB subunit that will check the other stand for damage. The protein is UvrABC system protein B of Oceanobacillus iheyensis (strain DSM 14371 / CIP 107618 / JCM 11309 / KCTC 3954 / HTE831).